The sequence spans 489 residues: Tripartite motif-containing protein 10 (489 aa).

The RING-type zinc finger occupies 16–61; sequence CPVCQGTLREPVTIDCGHNFCRVCLTRYLEITSPDPEEPPTCPLCK. The segment at 94–135 adopts a B box-type zinc-finger fold; sequence DEEDVCPEHGEKVYFFCEDDEMQLCVVCREAWEHRAHTVRFL. Zn(2+)-binding residues include cysteine 99, histidine 102, cysteine 121, and histidine 127. Residues 142-245 are a coiled coil; it reads YREQIQKCLE…IEELEEKKER (104 aa). Positions 292–486 constitute a B30.2/SPRY domain; sequence REMKMFLEKL…FSLSSQEGAA (195 aa).

Belongs to the TRIM/RBCC family. In terms of assembly, interacts with IFNAR1; this interaction prevents association of IFNAR1 with TYK2.

It is found in the cytoplasm. Its function is as follows. E3 ligase that plays an essential role in the differentiation and survival of terminal erythroid cells. May directly bind to PTEN and promote its ubiquitination, resulting in its proteasomal degradation and activation of hypertrophic signaling. In addition, plays a role in immune response regulation by repressing the phosphorylation of STAT1 and STAT2 in the interferon/JAK/STAT signaling pathway independent of its E3 ligase activity. Mechanistically, interacts with the intracellular domain of IFNAR1 and thereby inhibits the association between TYK2 and IFNAR1. The protein is Tripartite motif-containing protein 10 (TRIM10) of Bos taurus (Bovine).